A 135-amino-acid polypeptide reads, in one-letter code: Peptide methionine sulfoxide reductase MsrB (135 aa).

Residues 13-135 (DADWREQLTP…NGHSMVFEPV (123 aa)) form the MsrB domain. Residues Cys-52, Cys-55, Cys-101, and Cys-104 each contribute to the Zn(2+) site. Cys-124 acts as the Nucleophile in catalysis.

This sequence belongs to the MsrB Met sulfoxide reductase family. Zn(2+) is required as a cofactor.

The catalysed reaction is L-methionyl-[protein] + [thioredoxin]-disulfide + H2O = L-methionyl-(R)-S-oxide-[protein] + [thioredoxin]-dithiol. This chain is Peptide methionine sulfoxide reductase MsrB, found in Agrobacterium fabrum (strain C58 / ATCC 33970) (Agrobacterium tumefaciens (strain C58)).